The chain runs to 550 residues: uncharacterized protein (550 aa).

An N-terminal signal peptide occupies residues 1–53 (MVVIANKGALWAYYCKRLLNSVTYMMYPLIRKRTMKKLLLIVGLLLACSTVMR). 2 N-linked (GlcNAc...) asparagine glycosylation sites follow: N296 and N518.

The protein localises to the endoplasmic reticulum. This is an uncharacterized protein from Schizosaccharomyces pombe (strain 972 / ATCC 24843) (Fission yeast).